The chain runs to 358 residues: Golgi-resident adenosine 3',5'-bisphosphate 3'-phosphatase (358 aa).

Residue M1 is modified to N-acetylmethionine. Over 1–12 the chain is Cytoplasmic; sequence MAPMGIRLSPLG. A helical transmembrane segment spans residues 13-33; it reads VAVFCLLGLGVLYHLYSGFLA. Residues 34 to 358 are Lumenal-facing; it reads GRFSLFGLGG…KLPDLEKMGH (325 aa). A disordered region spans residues 85-106; it reads RESNVLHEKSKGKTREGADDKM. Residue D110 is the Proton acceptor of the active site. Mg(2+) contacts are provided by E133, D174, L176, and D177. Residue T179 is the Proton acceptor of the active site. 2 residues coordinate AMP: S242 and H245. N-linked (GlcNAc...) asparagine glycosylation occurs at N259. AMP contacts are provided by G268 and K272. D300 is a binding site for Mg(2+).

It belongs to the inositol monophosphatase superfamily. The cofactor is Mg(2+). In terms of processing, contains N-linked glycan resistant to endoglycosydase H.

The protein localises to the golgi apparatus. It is found in the trans-Golgi network membrane. It carries out the reaction adenosine 3',5'-bisphosphate + H2O = AMP + phosphate. It participates in sulfur metabolism. With respect to regulation, strongly inhibited by lithium. Exhibits 3'-nucleotidase activity toward adenosine 3',5'-bisphosphate (PAP), namely hydrolyzes adenosine 3',5'-bisphosphate into adenosine 5'-monophosphate (AMP) and a phosphate. May play a role in the formation of skeletal elements derived through endochondral ossification, possibly by clearing adenosine 3',5'-bisphosphate produced by Golgi sulfotransferases during glycosaminoglycan sulfation. Has no activity toward 3'-phosphoadenosine 5'-phosphosulfate (PAPS) or inositol phosphate (IP) substrates including I(1)P, I(1,4)P2, I(1,3,4)P3, I(1,4,5)P3 and I(1,3,4,5)P4. The chain is Golgi-resident adenosine 3',5'-bisphosphate 3'-phosphatase (BPNT2) from Callithrix jacchus (White-tufted-ear marmoset).